Reading from the N-terminus, the 440-residue chain is Transposon Ty1-PR3 Gag polyprotein (440 aa).

3 stretches are compositionally biased toward polar residues: residues 1–23, 48–60, and 127–152; these read MESQ…SVTS, TKAN…TPAS, and QSQF…GNTF. Disordered regions lie at residues 1–93, 126–173, and 352–440; these read MESQ…MMTQ, PQSQ…RPPP, and GSRN…PGTY. Over residues 153 to 165 the composition is skewed to low complexity; it reads TDSSSADSDMTST. An RNA-binding region spans residues 299 to 401; it reads NNGIHINNKV…NSKSKTARAH (103 aa). A compositionally biased stretch (low complexity) spans 402–418; the sequence is NVSTSNNSPSTDNDSIS. The residue at position 416 (serine 416) is a Phosphoserine. Over residues 419–428 the composition is skewed to polar residues; it reads KSTTEPIQLN. Positions 429 to 440 are enriched in basic and acidic residues; the sequence is NKHDLHLRPGTY.

As to quaternary structure, homotrimer.

It is found in the cytoplasm. Its function is as follows. Capsid protein (CA) is the structural component of the virus-like particle (VLP), forming the shell that encapsulates the retrotransposons dimeric RNA genome. The particles are assembled from trimer-clustered units and there are holes in the capsid shells that allow for the diffusion of macromolecules. CA also has nucleocapsid-like chaperone activity, promoting primer tRNA(i)-Met annealing to the multipartite primer-binding site (PBS), dimerization of Ty1 RNA and initiation of reverse transcription. This is Transposon Ty1-PR3 Gag polyprotein (TY1A-PR3) from Saccharomyces cerevisiae (strain ATCC 204508 / S288c) (Baker's yeast).